The chain runs to 553 residues: ATP synthase F(1) complex subunit alpha, mitochondrial (553 aa).

The N-terminal 43 residues, 1-43, are a transit peptide targeting the mitochondrion; it reads MLSVRVAAAVARALPRRAGLVSKNALGSSFVGARNLHASNTRL. 2 positions are modified to phosphoserine: Ser-53 and Ser-65. Ser-76 carries the phosphoserine; alternate modification. Ser-76 is a glycosylation site (O-linked (GlcNAc) serine; alternate). Ser-106 is modified (phosphoserine). An N6-acetyllysine mark is found at Lys-123, Lys-126, and Lys-132. Thr-134 is modified (phosphothreonine). Residue Lys-161 is modified to N6-acetyllysine; alternate. Lys-161 is modified (N6-succinyllysine; alternate). At Ser-166 the chain carries Phosphoserine. Position 167 is an N6-acetyllysine; alternate (Lys-167). The residue at position 167 (Lys-167) is an N6-succinyllysine; alternate. Ser-184 bears the Phosphoserine mark. Arg-204 bears the Omega-N-methylarginine mark. ATP is bound by residues Gln-215, Gly-217, Lys-218, Thr-219, and Ser-220. Residue Thr-219 coordinates Mg(2+). 2 positions are modified to N6-acetyllysine; alternate: Lys-230 and Lys-239. N6-succinyllysine; alternate is present on residues Lys-230 and Lys-239. The residue at position 240 (Lys-240) is an N6-acetyllysine. N6-acetyllysine; alternate is present on residues Lys-261 and Lys-305. N6-succinyllysine; alternate occurs at positions 261 and 305. A Mg(2+)-binding site is contributed by Asp-312. An N6-acetyllysine; alternate modification is found at Lys-427. Lys-427 is subject to N6-succinyllysine; alternate. Residue Lys-434 is modified to N6-acetyllysine. ATP contacts are provided by Gln-473 and Gln-475. 2 positions are modified to N6-acetyllysine; alternate: Lys-498 and Lys-506. Lys-498 and Lys-506 each carry N6-succinyllysine; alternate. Ser-521 bears the Phosphoserine mark. Residues Lys-531 and Lys-539 each carry the N6-acetyllysine; alternate modification. Lys-531 and Lys-539 each carry N6-succinyllysine; alternate. N6-acetyllysine is present on Lys-541.

The protein belongs to the ATPase alpha/beta chains family. In terms of assembly, homotrimer. Component of the ATP synthase complex composed at least of ATP5F1A/subunit alpha, ATP5F1B/subunit beta, ATP5MC1/subunit c (homooctomer), MT-ATP6/subunit a, MT-ATP8/subunit 8, ATP5ME/subunit e, ATP5MF/subunit f, ATP5MG/subunit g, ATP5MK/subunit k, ATP5MJ/subunit j, ATP5F1C/subunit gamma, ATP5F1D/subunit delta, ATP5F1E/subunit epsilon, ATP5PF/subunit F6, ATP5PB/subunit b, ATP5PD/subunit d, ATP5PO/subunit OSCP. ATP synthase complex consists of a soluble F(1) head domain (subunits alpha(3) and beta(3)) - the catalytic core - and a membrane F(0) domain - the membrane proton channel (subunits c, a, 8, e, f, g, k and j). These two domains are linked by a central stalk (subunits gamma, delta, and epsilon) rotating inside the F1 region and a stationary peripheral stalk (subunits F6, b, d, and OSCP). Interacts with ATPAF2. Interacts with HRG; the interaction occurs on the surface of T-cells and alters the cell morphology when associated with concanavalin (in vitro). Interacts with PLG (angiostatin peptide); the interaction inhibits most of the angiogenic properties of angiostatin. Interacts with BLOC1S1. Interacts with BCL2L1 isoform BCL-X(L); the interaction mediates the association of BCL2L1 isoform BCL-X(L) with the mitochondrial membrane F(1)F(0) ATP synthase and enhances neurons metabolic efficiency. Interacts with CLN5 and PPT1. Interacts with S100A1; this interaction increases F1-ATPase activity. Interacts with ABCB7; this interaction allows the regulation of cellular iron homeostasis and cellular reactive oxygen species (ROS) levels in cardiomyocytes. Acetylated on lysine residues. BLOC1S1 is required for acetylation. Acetylation of Lys-132, Lys-230 and Lys-498 is observed in liver mitochondria from fasted mice but not from fed mice.

It localises to the mitochondrion inner membrane. The protein resides in the cell membrane. Subunit alpha, of the mitochondrial membrane ATP synthase complex (F(1)F(0) ATP synthase or Complex V) that produces ATP from ADP in the presence of a proton gradient across the membrane which is generated by electron transport complexes of the respiratory chain. ATP synthase complex consist of a soluble F(1) head domain - the catalytic core - and a membrane F(1) domain - the membrane proton channel. These two domains are linked by a central stalk rotating inside the F(1) region and a stationary peripheral stalk. During catalysis, ATP synthesis in the catalytic domain of F(1) is coupled via a rotary mechanism of the central stalk subunits to proton translocation. In vivo, can only synthesize ATP although its ATP hydrolase activity can be activated artificially in vitro. With the catalytic subunit beta (ATP5F1B), forms the catalytic core in the F(1) domain. Subunit alpha does not bear the catalytic high-affinity ATP-binding sites. The chain is ATP synthase F(1) complex subunit alpha, mitochondrial from Mus musculus (Mouse).